We begin with the raw amino-acid sequence, 138 residues long: Small ribosomal subunit protein uS11c (138 aa).

The disordered stretch occupies residues 1 to 22; sequence MAKAIPKISSRRNGRIGSRKGA. Residues 9–22 are compositionally biased toward basic residues; it reads SSRRNGRIGSRKGA.

The protein belongs to the universal ribosomal protein uS11 family. Part of the 30S ribosomal subunit.

The protein localises to the plastid. It is found in the chloroplast. The polypeptide is Small ribosomal subunit protein uS11c (Nicotiana tabacum (Common tobacco)).